A 261-amino-acid polypeptide reads, in one-letter code: Small ribosomal subunit protein eS1z (261 aa).

The span at 1 to 18 (MAVGKNKRISKGKKGGKK) shows a compositional bias: basic residues. The interval 1–20 (MAVGKNKRISKGKKGGKKKA) is disordered.

This sequence belongs to the eukaryotic ribosomal protein eS1 family. As to quaternary structure, component of the small ribosomal subunit. Mature ribosomes consist of a small (40S) and a large (60S) subunit. The 40S subunit contains about 33 different proteins and 1 molecule of RNA (18S). The 60S subunit contains about 49 different proteins and 3 molecules of RNA (25S, 5.8S and 5S).

The protein localises to the cytoplasm. This is Small ribosomal subunit protein eS1z from Vitis vinifera (Grape).